The sequence spans 236 residues: tRNA1(Val) (adenine(37)-N6)-methyltransferase (236 aa).

The protein belongs to the methyltransferase superfamily. tRNA (adenine-N(6)-)-methyltransferase family.

Its subcellular location is the cytoplasm. It carries out the reaction adenosine(37) in tRNA1(Val) + S-adenosyl-L-methionine = N(6)-methyladenosine(37) in tRNA1(Val) + S-adenosyl-L-homocysteine + H(+). Functionally, specifically methylates the adenine in position 37 of tRNA(1)(Val) (anticodon cmo5UAC). The sequence is that of tRNA1(Val) (adenine(37)-N6)-methyltransferase from Histophilus somni (strain 129Pt) (Haemophilus somnus).